The sequence spans 547 residues: Chaperonin GroEL 2 (547 aa).

ATP contacts are provided by residues 30–33 (TLGP), Lys51, 87–91 (DGTTT), Gly415, and Asp496.

This sequence belongs to the chaperonin (HSP60) family. As to quaternary structure, forms a cylinder of 14 subunits composed of two heptameric rings stacked back-to-back. Interacts with the co-chaperonin GroES.

The protein resides in the cytoplasm. It carries out the reaction ATP + H2O + a folded polypeptide = ADP + phosphate + an unfolded polypeptide.. Its function is as follows. Together with its co-chaperonin GroES, plays an essential role in assisting protein folding. The GroEL-GroES system forms a nano-cage that allows encapsulation of the non-native substrate proteins and provides a physical environment optimized to promote and accelerate protein folding. This chain is Chaperonin GroEL 2, found in Rhodopseudomonas palustris (strain ATCC BAA-98 / CGA009).